A 279-amino-acid polypeptide reads, in one-letter code: NADPH-dependent 7-cyano-7-deazaguanine reductase (279 aa).

86-88 is a binding site for substrate; sequence IES. Residue 88 to 89 coordinates NADPH; that stretch reads SK. C187 serves as the catalytic Thioimide intermediate. Catalysis depends on D194, which acts as the Proton donor. 226–227 is a binding site for substrate; the sequence is HE. 255-256 lines the NADPH pocket; sequence RG.

Belongs to the GTP cyclohydrolase I family. QueF type 2 subfamily. As to quaternary structure, homodimer.

It is found in the cytoplasm. The enzyme catalyses 7-aminomethyl-7-carbaguanine + 2 NADP(+) = 7-cyano-7-deazaguanine + 2 NADPH + 3 H(+). It participates in tRNA modification; tRNA-queuosine biosynthesis. In terms of biological role, catalyzes the NADPH-dependent reduction of 7-cyano-7-deazaguanine (preQ0) to 7-aminomethyl-7-deazaguanine (preQ1). The sequence is that of NADPH-dependent 7-cyano-7-deazaguanine reductase from Haemophilus ducreyi (strain 35000HP / ATCC 700724).